Reading from the N-terminus, the 193-residue chain is Probable GTP-binding protein EngB (193 aa).

An EngB-type G domain is found at 22–193 (LLPEVALAGR…AAWEAIYRHL (172 aa)). Residues 30–37 (GRSNVGKS), 57–61 (GKTQT), 75–78 (DVPG), 142–145 (TKLD), and 174–176 (FSS) each bind GTP. Mg(2+) is bound by residues Ser37 and Thr59.

Belongs to the TRAFAC class TrmE-Era-EngA-EngB-Septin-like GTPase superfamily. EngB GTPase family. It depends on Mg(2+) as a cofactor.

In terms of biological role, necessary for normal cell division and for the maintenance of normal septation. The protein is Probable GTP-binding protein EngB of Exiguobacterium sibiricum (strain DSM 17290 / CCUG 55495 / CIP 109462 / JCM 13490 / 255-15).